A 472-amino-acid chain; its full sequence is Kynureninase 2 (472 aa).

Residues leucine 133, threonine 134, 162 to 165, aspartate 247, histidine 250, and tyrosine 272 contribute to the pyridoxal 5'-phosphate site; that span reads FPSD. Lysine 273 is modified (N6-(pyridoxal phosphate)lysine). Tryptophan 314 and asparagine 342 together coordinate pyridoxal 5'-phosphate.

This sequence belongs to the kynureninase family. As to quaternary structure, homodimer. Requires pyridoxal 5'-phosphate as cofactor.

It localises to the cytoplasm. The enzyme catalyses L-kynurenine + H2O = anthranilate + L-alanine + H(+). It catalyses the reaction 3-hydroxy-L-kynurenine + H2O = 3-hydroxyanthranilate + L-alanine + H(+). Its pathway is amino-acid degradation; L-kynurenine degradation; L-alanine and anthranilate from L-kynurenine: step 1/1. It functions in the pathway cofactor biosynthesis; NAD(+) biosynthesis; quinolinate from L-kynurenine: step 2/3. Functionally, catalyzes the cleavage of L-kynurenine (L-Kyn) and L-3-hydroxykynurenine (L-3OHKyn) into anthranilic acid (AA) and 3-hydroxyanthranilic acid (3-OHAA), respectively. This chain is Kynureninase 2 (kyn-2), found in Neurospora crassa (strain ATCC 24698 / 74-OR23-1A / CBS 708.71 / DSM 1257 / FGSC 987).